The chain runs to 511 residues: Phospho-2-dehydro-3-deoxyheptonate aldolase 2, chloroplastic (511 aa).

This sequence belongs to the class-II DAHP synthase family. As to expression, leaves, stems, tuber and roots.

It is found in the plastid. Its subcellular location is the chloroplast. The catalysed reaction is D-erythrose 4-phosphate + phosphoenolpyruvate + H2O = 7-phospho-2-dehydro-3-deoxy-D-arabino-heptonate + phosphate. Its pathway is metabolic intermediate biosynthesis; chorismate biosynthesis; chorismate from D-erythrose 4-phosphate and phosphoenolpyruvate: step 1/7. In Solanum tuberosum (Potato), this protein is Phospho-2-dehydro-3-deoxyheptonate aldolase 2, chloroplastic (SHKB).